Reading from the N-terminus, the 429-residue chain is Saccharopine dehydrogenase-like oxidoreductase (429 aa).

An N-acetylalanine modification is found at alanine 2. A Phosphoserine modification is found at serine 217.

It belongs to the saccharopine dehydrogenase family.

The protein is Saccharopine dehydrogenase-like oxidoreductase (SCCPDH) of Pongo abelii (Sumatran orangutan).